We begin with the raw amino-acid sequence, 164 residues long: FMN reductase (NADH) RutF (164 aa).

Belongs to the non-flavoprotein flavin reductase family. RutF subfamily.

It catalyses the reaction FMNH2 + NAD(+) = FMN + NADH + 2 H(+). Its function is as follows. Catalyzes the reduction of FMN to FMNH2 which is used to reduce pyrimidine by RutA via the Rut pathway. This Enterobacter sp. (strain 638) protein is FMN reductase (NADH) RutF.